The sequence spans 1666 residues: Atrochrysone carboxylic acid synthase PKS4 (1666 aa).

The Ketosynthase family 3 (KS3) domain maps to 15–452 (FEPIAIVGIG…GNAGFMVIEE (438 aa)). Residues Cys-194, His-332, and His-372 each act as for beta-ketoacyl synthase activity in the active site. The malonyl-CoA:ACP transacylase (MAT) domain stretch occupies residues 555–863 (AFCFSGQGGE…WMTALDALMR (309 aa)). Residue Ser-632 is the For acyl/malonyl transferase activity of the active site. The tract at residues 905 to 1034 (REVKASSTML…EQDLLESLSL (130 aa)) is N-terminal hotdog fold. One can recognise a PKS/mFAS DH domain in the interval 905-1206 (REVKASSTML…MAKMKIYVLK (302 aa)). The interval 935-1203 (LLNHVMAGYT…DVRMAKMKIY (269 aa)) is product template (PT) domain. Residues 1050–1206 (STDVLRKELA…MAKMKIYVLK (157 aa)) form a C-terminal hotdog fold region. Position 1269 is an O-(pantetheine 4'-phosphoryl)serine (Ser-1269). Residues 1331-1395 (ATSPSLPIMP…TSTEPSQTLV (65 aa)) form the Carrier domain. The segment at 1334-1397 (PSLPIMPNGV…TEPSQTLVAN (64 aa)) is proline-rich linker region. The interval 1444-1529 (TVIGIHCPGL…PPGVVGLTAQ (86 aa)) is alpha/beta hydrolase superfamily-type thioesterase (TE) domain.

It catalyses the reaction holo-[ACP] + 8 malonyl-CoA + 8 H(+) = atrochrysone carboxyl-[ACP] + 8 CO2 + 8 CoA + 2 H2O. Its pathway is secondary metabolite biosynthesis. In terms of biological role, non-reducing polyketide synthase that synthesizes the universal anthraquinone precursor atrochrysone carboxylic acid from malonyl-CoA. Produces a mixture of both 3R and 3S enantiomers with an excess of the 3S form. PKS4 catalyzes both hepta- and octaketide synthesis and also yields 6-hydroxymusizin, probably via carboxylating activity inherent to the KS domain. This Calonarius odorifer (Mushroom) protein is Atrochrysone carboxylic acid synthase PKS4.